A 1442-amino-acid polypeptide reads, in one-letter code: CD109 antigen (1442 aa).

Residues 1–21 form the signal peptide; the sequence is MRSRRLLSAAHLLCLCAVALA. N-linked (GlcNAc...) asparagine glycans are attached at residues asparagine 67, asparagine 117, asparagine 246, asparagine 278, asparagine 370, and asparagine 421. Residues 595–704 are bait region (approximate); sequence DKSVTLMENS…TWIWLDAYMG (110 aa). The isoglutamyl cysteine thioester (Cys-Gln) cross-link spans 923-926; it reads CGEQ. An N-linked (GlcNAc...) asparagine glycan is attached at asparagine 1088. Alanine 1419 is lipidated: GPI-anchor amidated alanine. Residues 1420–1442 constitute a propeptide, removed in mature form; the sequence is TDSLRRSSSLLVFCSVLLYFVQH.

Belongs to the protease inhibitor I39 (alpha-2-macroglobulin) family. Heterodimer; disulfide-linked. Interacts with TGFB1 and TGFBR1. Forms a heteromeric complex with TGFBR1, TGFBR2 and TGFBR3 in a ligand-independent manner. N-glycosylated. In terms of processing, 2 forms of 150 (p150) and 120 kDa (p120) exist due to proteolytic degradation from a 180 kDa form.

It is found in the cell membrane. In terms of biological role, modulates negatively TGFB1 signaling in keratinocytes. This chain is CD109 antigen (Cd109), found in Mus musculus (Mouse).